A 1482-amino-acid chain; its full sequence is Cystic fibrosis transmembrane conductance regulator (1482 aa).

Over 1–77 (MQRSPLEKAS…KLINALRRCF (77 aa)) the chain is Cytoplasmic. A helical membrane pass occupies residues 78-98 (FWRFMFYGILLYLGEVTKAVQ). The 285-residue stretch at 81–365 (FMFYGILLYL…WAVQTWYDSL (285 aa)) folds into the ABC transmembrane type-1 1 domain. At 99–122 (PLLLGRIIASYDPDNKVERSIAIY) the chain is on the extracellular side. A helical transmembrane segment spans residues 123-146 (LGIGLCLLFIVRTLLLHPAIFGLH). Residues 147-195 (HIGMQMRIAMFSLIYKKILKLSSRVLDKISIGQLVSLLSNNLNKFDEGL) lie on the Cytoplasmic side of the membrane. Residues 196–216 (ALAHFVWIAPLQVTLLMGLLW) traverse the membrane as a helical segment. Residues 217 to 222 (ELLQAS) are Extracellular-facing. Residues 223 to 243 (AFCGLGFLIVLALVQAGLGRM) form a helical membrane-spanning segment. Over 244–298 (MMKYRDQRAGKINERLVITSEMIENIQSVKAYCWEEAMEKMIENLRQTELKLTRK) the chain is Cytoplasmic. Residues 299 to 319 (AAYVRYFNSSAFFFSGFFVVF) traverse the membrane as a helical segment. Over 320–339 (LSVLPYALIKGIILRKIFTT) the chain is Extracellular. A helical transmembrane segment spans residues 340 to 358 (ISFCIVLRMAVTRQFPWAV). Residues 359-859 (QTWYDSLGAI…YLRYLAVNKS (501 aa)) are Cytoplasmic-facing. ATP-binding positions include tryptophan 401, 458-465 (GSTGAGKT), and glutamine 493. One can recognise an ABC transporter 1 domain in the interval 423–646 (NGDNSLFFSN…RPDFSSKLMG (224 aa)). The S-palmitoyl cysteine moiety is linked to residue cysteine 524. A phosphoserine mark is found at serine 549 and serine 660. Residues 654–832 (SAERRNSILT…EEINEEYLKE (179 aa)) are disordered R region. At serine 670 the chain carries Phosphoserine; by PKA. Phosphoserine is present on serine 686. A Glycyl lysine isopeptide (Lys-Gly) (interchain with G-Cter in ubiquitin) cross-link involves residue lysine 688. Serine 700 and serine 712 each carry phosphoserine. Phosphothreonine is present on threonine 717. 5 positions are modified to phosphoserine: serine 738, serine 769, serine 791, serine 796, and serine 814. Residues 860–880 (LSLVLIWCLVIFLAEVAISLA) form a helical membrane-spanning segment. Residues 860 to 1156 (LSLVLIWCLV…AVNSSIDVDS (297 aa)) form the ABC transmembrane type-1 2 domain. Residues 881–919 (VLLLLDKSPRYSKGNGTASGNGSSAVIITSTSSYYLFYI) are Extracellular-facing. N-linked (GlcNAc...) asparagine glycans are attached at residues asparagine 895 and asparagine 901. Residues 920–940 (YVGVADTLLALGFFRGLPLVH) form a discontinuously helical membrane-spanning segment. Over 941-991 (TLITVSKILHHRMLHSVLRAPMSTLNMLKAGGILNRFSKDIAILDDLLPLT) the chain is Cytoplasmic. A helical membrane pass occupies residues 992–1012 (IFDFVQLLLIVIGAVAVVSVL). Over 1013-1014 (QP) the chain is Extracellular. Residues 1015 to 1035 (YIFLATVPVIAAFVILRGYFL) form a helical membrane-spanning segment. Over 1036–1096 (HTSQQLKQLE…TANWFLYLST (61 aa)) the chain is Cytoplasmic. The helical transmembrane segment at 1097 to 1117 (LRWFQMRIEMIFVVFFIAVTF) threads the bilayer. The Extracellular segment spans residues 1118–1131 (ISILTTGEGEGTVG). A helical transmembrane segment spans residues 1132–1152 (IILTLAMNIMGTLQWAVNSSI). Over 1153-1482 (DVDSLMRSVS…TEEEVQETRL (330 aa)) the chain is Cytoplasmic. In terms of domain architecture, ABC transporter 2 spans 1212-1445 (MTVKDLTARY…KSLFRQAISP (234 aa)). Residues tyrosine 1221 and 1246–1253 (GRTGAGKS) each bind ATP. The interaction with GORASP2 stretch occupies residues 1388 to 1482 (RTLKQAFADC…TEEEVQETRL (95 aa)). The S-palmitoyl cysteine moiety is linked to residue cysteine 1397. 2 positions are modified to phosphoserine: serine 1446 and serine 1458. Positions 1450–1482 (KLFPRRNSSKHKSRSPITALKEETEEEVQETRL) are disordered. A compositionally biased stretch (basic residues) spans 1451 to 1463 (LFPRRNSSKHKSR). The span at 1472 to 1482 (ETEEEVQETRL) shows a compositional bias: acidic residues. Positions 1480-1482 (TRL) match the PDZ-binding motif.

This sequence belongs to the ABC transporter superfamily. ABCC family. CFTR transporter (TC 3.A.1.202) subfamily. As to quaternary structure, monomer; does not require oligomerization for channel activity. May form oligomers in the membrane. Interacts with SLC26A3, SLC26A6 and NHERF1. Interacts with SHANK2. Interacts with MYO6. Interacts (via C-terminus) with GOPC (via PDZ domain); this promotes CFTR internalization and thereby decreases channel activity. Interacts with SLC4A7 through NHERF1. Found in a complex with MYO5B and RAB11A. Interacts with ANO1. Interacts with SLC26A8. Interacts with AHCYL1; the interaction increases CFTR activity. Interacts with CSE1L. The core-glycosylated form interacts with GORASP2 (via PDZ GRASP-type 1 domain) in respone to ER stress. Interacts with MARCHF2; the interaction leads to CFTR ubiqtuitination and degradation. Interacts with ADGRG2. In terms of processing, N-glycosylated. Post-translationally, phosphorylated; cAMP treatment promotes phosphorylation and activates the channel. Dephosphorylation decreases the ATPase activity (in vitro). Phosphorylation at PKA sites activates the channel. Phosphorylation at PKC sites enhances the response to phosphorylation by PKA. Phosphorylated by AMPK; this inhibits channel activity. Ubiquitinated, leading to its degradation in the lysosome. Deubiquitination by USP10 in early endosomes enhances its endocytic recycling to the cell membrane. Ubiquitinated by RNF185 during ER stress. Ubiquitinated by MARCHF2.

It localises to the apical cell membrane. Its subcellular location is the early endosome membrane. It is found in the cell membrane. The protein resides in the recycling endosome membrane. The protein localises to the endoplasmic reticulum membrane. It localises to the nucleus. The enzyme catalyses ATP + H2O + closed Cl(-) channel = ADP + phosphate + open Cl(-) channel.. It catalyses the reaction chloride(in) = chloride(out). It carries out the reaction hydrogencarbonate(in) = hydrogencarbonate(out). The catalysed reaction is ATP + H2O = ADP + phosphate + H(+). Epithelial ion channel that plays an important role in the regulation of epithelial ion and water transport and fluid homeostasis. Mediates the transport of chloride ions across the cell membrane. Possesses an intrinsic ATPase activity and utilizes ATP to gate its channel; the passive flow of anions through the channel is gated by cycles of ATP binding and hydrolysis by the ATP-binding domains. The ion channel is also permeable to HCO(3)(-); selectivity depends on the extracellular chloride concentration. Exerts its function also by modulating the activity of other ion channels and transporters. Contributes to the regulation of the pH and the ion content of the epithelial fluid layer. Modulates the activity of the epithelial sodium channel (ENaC) complex, in part by regulating the cell surface expression of the ENaC complex. May regulate bicarbonate secretion and salvage in epithelial cells by regulating the transporter SLC4A7. Can inhibit the chloride channel activity of ANO1. Plays a role in the chloride and bicarbonate homeostasis during sperm epididymal maturation and capacitation. The chain is Cystic fibrosis transmembrane conductance regulator from Otolemur garnettii (Small-eared galago).